Consider the following 201-residue polypeptide: Recombination protein RecR (201 aa).

A C4-type zinc finger spans residues 57–74 (CRICGNITENSVNPCAIC). The Toprim domain maps to 82-178 (STVFVVENSR…KVTRLAHGLA (97 aa)).

The protein belongs to the RecR family.

May play a role in DNA repair. It seems to be involved in an RecBC-independent recombinational process of DNA repair. It may act with RecF and RecO. This is Recombination protein RecR from Leuconostoc citreum (strain KM20).